Here is a 571-residue protein sequence, read N- to C-terminus: E3 ubiquitin-protein ligase RNF168 (571 aa).

The RING-type zinc-finger motif lies at 16–55; it reads CGICMEILVEPVTLPCNHTLCKPCFQSTVEKASLCCPFCR. The residue at position 70 (Ser-70) is a Phosphoserine. The short motif at 110–128 is the LR motif 1 element; it reads LSKPGELRREYEEEISKVA. Ser-134 carries the phosphoserine modification. The short motif at 143–151 is the UMI motif element; it reads EEYIQRLLA. Disordered regions lie at residues 151–174 and 191–292; these read AEEE…QLKS and EGSI…GADS. An MIU motif 1 motif is present at residues 168–191; that stretch reads MEEQLKSDEELARKLSIDINNFCE. Residue Ser-197 is modified to Phosphoserine. Over residues 202-214 the composition is skewed to basic and acidic residues; it reads RKSDPVTPKSEKK. Lys-210 participates in a covalent cross-link: Glycyl lysine isopeptide (Lys-Gly) (interchain with G-Cter in SUMO2). Polar residues predominate over residues 231–242; that stretch reads PKSQFGSASHSE. Positions 243–263 are enriched in basic and acidic residues; it reads AVQEVRKDSVSKDIDSSDRKS. The residue at position 362 (Thr-362) is a Phosphothreonine. Disordered regions lie at residues 390–422 and 459–560; these read NQES…EETE and KEQM…ISQK. A phosphoserine mark is found at Ser-411, Ser-414, and Ser-415. An MIU motif 2 motif is present at residues 439–462; it reads RHKQEEQDRLLALQLQKEVDKEQM. Positions 466 to 477 match the LR motif 2 motif; that stretch reads RQKGSPDEYHLR. Ser-470 is modified (phosphoserine). Positions 508–519 are enriched in basic and acidic residues; the sequence is PTPERGSRDKNR. Polar residues-rich tracts occupy residues 520-530 and 549-560; these read QVSLKMQLKQS and SAHSLQPSISQK. Lys-528 participates in a covalent cross-link: Glycyl lysine isopeptide (Lys-Gly) (interchain with G-Cter in SUMO2).

Belongs to the RNF168 family. In terms of assembly, monomer. Interacts with UBE2N/UBC13. In terms of processing, sumoylated with SUMO1 by PIAS4 in response to double-strand breaks (DSBs). Ubiquitinated.

It is found in the nucleus. It carries out the reaction S-ubiquitinyl-[E2 ubiquitin-conjugating enzyme]-L-cysteine + [acceptor protein]-L-lysine = [E2 ubiquitin-conjugating enzyme]-L-cysteine + N(6)-ubiquitinyl-[acceptor protein]-L-lysine.. It functions in the pathway protein modification; protein ubiquitination. Its function is as follows. E3 ubiquitin-protein ligase required for accumulation of repair proteins to sites of DNA damage. Acts with UBE2N/UBC13 to amplify the RNF8-dependent histone ubiquitination. Recruited to sites of DNA damage at double-strand breaks (DSBs) by binding to ubiquitinated histone H2A and H2AX and amplifies the RNF8-dependent H2A ubiquitination, promoting the formation of 'Lys-63'-linked ubiquitin conjugates. This leads to concentrate ubiquitinated histones H2A and H2AX at DNA lesions to the threshold required for recruitment of TP53BP1 and BRCA1. Also recruited at DNA interstrand cross-links (ICLs) sites and promotes accumulation of 'Lys-63'-linked ubiquitination of histones H2A and H2AX, leading to recruitment of FAAP20/C1orf86 and Fanconi anemia (FA) complex, followed by interstrand cross-link repair. H2A ubiquitination also mediates the ATM-dependent transcriptional silencing at regions flanking DSBs in cis, a mechanism to avoid collision between transcription and repair intermediates. Also involved in class switch recombination in immune system, via its role in regulation of DSBs repair. Following DNA damage, promotes the ubiquitination and degradation of JMJD2A/KDM4A in collaboration with RNF8, leading to unmask H4K20me2 mark and promote the recruitment of TP53BP1 at DNA damage sites. Not able to initiate 'Lys-63'-linked ubiquitination in vitro; possibly due to partial occlusion of the UBE2N/UBC13-binding region. Catalyzes monoubiquitination of 'Lys-13' and 'Lys-15' of nucleosomal histone H2A (H2AK13Ub and H2AK15Ub, respectively). The polypeptide is E3 ubiquitin-protein ligase RNF168 (Homo sapiens (Human)).